The following is a 308-amino-acid chain: Transaldolase (308 aa).

Catalysis depends on Lys-125, which acts as the Schiff-base intermediate with substrate.

Belongs to the transaldolase family. Type 1 subfamily. In terms of assembly, homodimer.

It localises to the cytoplasm. The catalysed reaction is D-sedoheptulose 7-phosphate + D-glyceraldehyde 3-phosphate = D-erythrose 4-phosphate + beta-D-fructose 6-phosphate. Its pathway is carbohydrate degradation; pentose phosphate pathway; D-glyceraldehyde 3-phosphate and beta-D-fructose 6-phosphate from D-ribose 5-phosphate and D-xylulose 5-phosphate (non-oxidative stage): step 2/3. Its function is as follows. Transaldolase is important for the balance of metabolites in the pentose-phosphate pathway. This chain is Transaldolase, found in Pseudomonas fluorescens (strain ATCC BAA-477 / NRRL B-23932 / Pf-5).